We begin with the raw amino-acid sequence, 202 residues long: Chromophore lyase CpcT/CpeT 2 (202 aa).

It belongs to the CpcT/CpeT biliprotein lyase family.

Functionally, covalently attaches a chromophore to Cys residue(s) of phycobiliproteins. The polypeptide is Chromophore lyase CpcT/CpeT 2 (Gloeobacter violaceus (strain ATCC 29082 / PCC 7421)).